We begin with the raw amino-acid sequence, 506 residues long: Histidine ammonia-lyase (506 aa).

Positions 143–145 (ASG) form a cross-link, 5-imidazolinone (Ala-Gly). Serine 144 carries the 2,3-didehydroalanine (Ser) modification.

It belongs to the PAL/histidase family. Post-translationally, contains an active site 4-methylidene-imidazol-5-one (MIO), which is formed autocatalytically by cyclization and dehydration of residues Ala-Ser-Gly.

Its subcellular location is the cytoplasm. It carries out the reaction L-histidine = trans-urocanate + NH4(+). Its pathway is amino-acid degradation; L-histidine degradation into L-glutamate; N-formimidoyl-L-glutamate from L-histidine: step 1/3. This chain is Histidine ammonia-lyase, found in Salmonella typhi.